A 757-amino-acid polypeptide reads, in one-letter code: Cell cycle progression protein 1 (757 aa).

The Cytoplasmic portion of the chain corresponds to 1–217 (MSENSSDSDS…KRQFSSGLNK (217 aa)). An interaction with MCF2L and SRC region spans residues 1–308 (MSENSSDSDS…QKTNLATENQ (308 aa)). Residues 152–207 (VFSSQPSDDESSSDETSNQPSPAFRRRRARKKTVSASESEDRLVAEQETEPSKELS) are disordered. The segment covering 175 to 184 (FRRRRARKKT) has biased composition (basic residues). Position 186 is a phosphoserine (Ser-186). Residues 190–207 (SEDRLVAEQETEPSKELS) are compositionally biased toward basic and acidic residues. Residues 218–238 (CVILALVIAISMGFGHFYGTI) traverse the membrane as a helical; Signal-anchor for type II membrane protein segment. The Lumenal portion of the chain corresponds to 239-757 (QIQKRQQLVR…YIKPCHYSSL (519 aa)). Coiled coils occupy residues 248-272 (RKIHEDELNDMKDYLSQCQQEQESF) and 306-450 (ENQY…LWER). Over residues 458–468 (QNGKQGTDGKK) the composition is skewed to basic and acidic residues. The segment at 458-483 (QNGKQGTDGKKKGGRGSHRAKNKSKE) is disordered. Positions 469-479 (KGGRGSHRAKN) are enriched in basic residues. The stretch at 504–530 (VRHHKEKIKQAKEAVKENLKKFSDSVK) forms a coiled coil.

This sequence belongs to the CCPG1 family. Interacts with MCF2L. May interact with MCF2, ARHGEF1, BCR, VAV1 and FGD1, but not with TIAM1. Interacts with GTP-bound CDC42 and SRC.

The protein localises to the cytoplasmic granule membrane. Acts as an assembly platform for Rho protein signaling complexes. Limits guanine nucleotide exchange activity of MCF2L toward RHOA, which results in an inhibition of both its transcriptional activation ability and its transforming activity. Does not inhibit activity of MCF2L toward CDC42, or activity of MCF2 toward either RHOA or CDC42. May be involved in cell cycle regulation. This chain is Cell cycle progression protein 1 (CCPG1), found in Homo sapiens (Human).